The sequence spans 1452 residues: Protein clueless (1452 aa).

Disordered stretches follow at residues 1–93 and 266–288; these read MALE…SNGH and KKTRPDSVDCTPPEYVTPGVSEP. Residues 8 to 24 are compositionally biased toward low complexity; that stretch reads KNSNATATSDATATKAS. Residues 42-59 are compositionally biased toward polar residues; the sequence is PIPNSNHQNSNQNLVNGN. Residues 68–77 are compositionally biased toward basic residues; sequence AKKKGKKNRN. Residue Ser-272 is modified to Phosphoserine. The region spanning 426 to 668 is the Clu domain; the sequence is RAEDAFSSKL…RTFPPDVNFL (243 aa). 3 disordered regions span residues 726 to 775, 962 to 1013, and 1414 to 1452; these read KQSE…GDTK, AVSS…SSVS, and ANNNGEAEDAVPKDVEEQKEAGTQLTNGEKAAATEATSS. Residues 750–766 show a composition bias toward basic and acidic residues; it reads GADKTDVKEEKNEENEK. Positions 970 to 985 are enriched in basic residues; sequence KKRGNGGKHNKHKSSK. The span at 990 to 1013 shows a compositional bias: low complexity; the sequence is QQQQQATGNQNGSSSGSSNGSSVS. Basic and acidic residues predominate over residues 1423–1433; it reads AVPKDVEEQKE.

Belongs to the CLU family.

The protein resides in the cytoplasm. In terms of biological role, mRNA-binding protein involved in proper cytoplasmic distribution of mitochondria. The chain is Protein clueless from Drosophila erecta (Fruit fly).